Here is a 468-residue protein sequence, read N- to C-terminus: UDP-N-acetylmuramoyl-L-alanine--L-glutamate ligase (468 aa).

Position 122 to 128 (122 to 128) interacts with ATP; it reads GTKGKST.

The protein belongs to the MurCDEF family. MurD2 subfamily.

The protein resides in the cytoplasm. It catalyses the reaction UDP-N-acetyl-alpha-D-muramoyl-L-alanine + L-glutamate + ATP = UDP-N-acetyl-alpha-D-muramoyl-L-alanyl-L-glutamate + ADP + phosphate + H(+). It participates in cell wall biogenesis; peptidoglycan biosynthesis. Its function is as follows. Cell wall formation. Catalyzes the addition of L-glutamate to the nucleotide precursor UDP-N-acetylmuramoyl-L-alanine. This is UDP-N-acetylmuramoyl-L-alanine--L-glutamate ligase from Xanthomonas campestris pv. campestris (strain 8004).